The chain runs to 466 residues: Histidine--tRNA ligase (466 aa).

Belongs to the class-II aminoacyl-tRNA synthetase family. Homodimer.

It localises to the cytoplasm. The enzyme catalyses tRNA(His) + L-histidine + ATP = L-histidyl-tRNA(His) + AMP + diphosphate + H(+). This Bifidobacterium animalis subsp. lactis (strain AD011) protein is Histidine--tRNA ligase.